Consider the following 450-residue polypeptide: Biotin carboxylase 1 (450 aa).

The region spanning 1-447 (MIKKLLIANR…NTKFLETYDV (447 aa)) is the Biotin carboxylation domain. ATP-binding positions include Lys-116, Lys-158, 164 to 165 (GG), 200 to 203 (EKYI), and His-208. The region spanning 120–318 (RETMKQAGVP…LIKEQIKVAS (199 aa)) is the ATP-grasp domain. Position 237 (Lys-237) interacts with hydrogencarbonate. ATP is bound by residues Glu-275 and Glu-289. Glu-275, Glu-289, and Asn-291 together coordinate Mg(2+). The Mn(2+) site is built by Glu-275, Glu-289, and Asn-291. Residues Arg-293, Val-296, and Arg-339 each coordinate hydrogencarbonate. Arg-293 is an active-site residue. Arg-339 contributes to the biotin binding site.

As to quaternary structure, acetyl-CoA carboxylase is a heterohexamer of biotin carboxyl carrier protein, biotin carboxylase and the two subunits of carboxyl transferase in a 2:2 complex. The cofactor is Mg(2+). Mn(2+) is required as a cofactor.

The enzyme catalyses N(6)-biotinyl-L-lysyl-[protein] + hydrogencarbonate + ATP = N(6)-carboxybiotinyl-L-lysyl-[protein] + ADP + phosphate + H(+). It functions in the pathway lipid metabolism; malonyl-CoA biosynthesis; malonyl-CoA from acetyl-CoA: step 1/1. Its function is as follows. This protein is a component of the acetyl coenzyme A carboxylase complex; first, biotin carboxylase catalyzes the carboxylation of the carrier protein and then the transcarboxylase transfers the carboxyl group to form malonyl-CoA. The polypeptide is Biotin carboxylase 1 (accC1) (Bacillus subtilis (strain 168)).